We begin with the raw amino-acid sequence, 131 residues long: Global transcriptional regulator Spx 2 (131 aa).

C10 and C13 are disulfide-bonded.

The protein belongs to the ArsC family. Spx subfamily. Interacts with the C-terminal domain of the alpha subunit of the RNAP.

It localises to the cytoplasm. Its function is as follows. Global transcriptional regulator that plays a key role in stress response and exerts either positive or negative regulation of genes. Acts by interacting with the C-terminal domain of the alpha subunit of the RNA polymerase (RNAP). This interaction can enhance binding of RNAP to the promoter region of target genes and stimulate their transcription, or block interaction of RNAP with activator. The protein is Global transcriptional regulator Spx 2 of Bacillus anthracis.